A 353-amino-acid chain; its full sequence is Stomatin-like protein 2, mitochondrial (353 aa).

Residues 1 to 28 constitute a mitochondrion transit peptide; that stretch reads MLARAARGTGALLLRGSVQASGRVPRRA. Phosphoserine; by PKC/PRKCZ is present on serine 17. Phosphotyrosine is present on tyrosine 124. N6-acetyllysine; alternate is present on lysine 145. The residue at position 145 (lysine 145) is an N6-succinyllysine; alternate. Residues 215–252 adopt a coiled-coil conformation; that stretch reads INVAEGKKQAQILASEAEKAEQINQAAGEASAVLAKAK. Lysine 233 is modified (N6-acetyllysine). The disordered stretch occupies residues 324-353; sequence VPGAQNSSQSRRDVQATDTSIEELGRVKLS. Phosphoserine is present on serine 330.

The protein belongs to the band 7/mec-2 family. In terms of assembly, forms homooligomers. Interacts with MFN2; may form heterooligomers. Interacts with PHB1 and PHB2; recruits them to cardiolipin-enriched mitochondrial membranes and stabilizes them. Interacts with CACNA2D2.

It is found in the cell membrane. The protein localises to the mitochondrion. It localises to the mitochondrion inner membrane. The protein resides in the mitochondrion intermembrane space. Its subcellular location is the membrane raft. It is found in the cytoplasm. The protein localises to the cytoskeleton. Its function is as follows. Mitochondrial protein that probably regulates the biogenesis and the activity of mitochondria. Stimulates cardiolipin biosynthesis, binds cardiolipin-enriched membranes where it recruits and stabilizes some proteins including prohibitin and may therefore act in the organization of functional microdomains in mitochondrial membranes. Through regulation of the mitochondrial function may play a role into several biological processes including cell migration, cell proliferation, T-cell activation, calcium homeostasis and cellular response to stress. May play a role in calcium homeostasis through negative regulation of calcium efflux from mitochondria. Required for mitochondrial hyperfusion a pro-survival cellular response to stress which results in increased ATP production by mitochondria. May also regulate the organization of functional domains at the plasma membrane and play a role in T-cell activation through association with the T-cell receptor signaling complex and its regulation. This Mus musculus (Mouse) protein is Stomatin-like protein 2, mitochondrial (Stoml2).